The chain runs to 486 residues: Cardiolipin synthase A (486 aa).

Transmembrane regions (helical) follow at residues 3–23 (TVYT…IAGV) and 38–58 (MAWL…YLAV). PLD phosphodiesterase domains follow at residues 219–246 (MDLR…VDPR) and 399–426 (EGGL…DMRS). Residues His224, Lys226, Asp231, His404, Lys406, and Asp411 contribute to the active site.

This sequence belongs to the phospholipase D family. Cardiolipin synthase subfamily. ClsA sub-subfamily.

It is found in the cell inner membrane. It carries out the reaction 2 a 1,2-diacyl-sn-glycero-3-phospho-(1'-sn-glycerol) = a cardiolipin + glycerol. Its function is as follows. Catalyzes the reversible phosphatidyl group transfer from one phosphatidylglycerol molecule to another to form cardiolipin (CL) (diphosphatidylglycerol) and glycerol. The protein is Cardiolipin synthase A of Shigella boydii serotype 4 (strain Sb227).